A 127-amino-acid chain; its full sequence is Aspartate 1-decarboxylase (127 aa).

Residue S25 is the Schiff-base intermediate with substrate; via pyruvic acid of the active site. S25 bears the Pyruvic acid (Ser) mark. Substrate is bound at residue T57. The active-site Proton donor is Y58. Residue 73–75 (GAA) participates in substrate binding.

This sequence belongs to the PanD family. In terms of assembly, heterooctamer of four alpha and four beta subunits. Pyruvate serves as cofactor. Is synthesized initially as an inactive proenzyme, which is activated by self-cleavage at a specific serine bond to produce a beta-subunit with a hydroxyl group at its C-terminus and an alpha-subunit with a pyruvoyl group at its N-terminus.

It localises to the cytoplasm. The enzyme catalyses L-aspartate + H(+) = beta-alanine + CO2. It participates in cofactor biosynthesis; (R)-pantothenate biosynthesis; beta-alanine from L-aspartate: step 1/1. In terms of biological role, catalyzes the pyruvoyl-dependent decarboxylation of aspartate to produce beta-alanine. The polypeptide is Aspartate 1-decarboxylase (Bacillus cereus (strain ATCC 10987 / NRS 248)).